The following is a 515-amino-acid chain: Zinc metalloproteinase-disintegrin-like EoMP06 (515 aa).

Residues 1–94 (VEDHCYYHGR…TLGLIVPPHG (94 aa)) constitute a propeptide that is removed on maturation. The residue at position 95 (glutamine 95) is a Pyrrolidone carboxylic acid. The Peptidase M12B domain occupies 100 to 296 (KFIELIIVVD…YNPKCIVDPP (197 aa)). Glutamate 103 lines the Ca(2+) pocket. Asparagine 160 is a glycosylation site (N-linked (GlcNAc...) asparagine). Aspartate 187 lines the Ca(2+) pocket. Residues asparagine 194 and asparagine 225 are each glycosylated (N-linked (GlcNAc...) asparagine). 3 cysteine pairs are disulfide-bonded: cysteine 211–cysteine 291, cysteine 251–cysteine 275, and cysteine 253–cysteine 258. Histidine 236 is a binding site for Zn(2+). Glutamate 237 is a catalytic residue. Residues histidine 240 and histidine 246 each contribute to the Zn(2+) site. Positions 291, 306, 309, 311, 313, 316, and 319 each coordinate Ca(2+). The Disintegrin domain maps to 304 to 390 (PAVCGNGVWE…ECPRNEFQRN (87 aa)). 14 disulfides stabilise this stretch: cysteine 307-cysteine 336, cysteine 318-cysteine 331, cysteine 320-cysteine 326, cysteine 330-cysteine 353, cysteine 344-cysteine 350, cysteine 349-cysteine 375, cysteine 362-cysteine 382, cysteine 369-cysteine 401, cysteine 394-cysteine 406, cysteine 413-cysteine 466, cysteine 428-cysteine 477, cysteine 441-cysteine 454, cysteine 461-cysteine 503, and cysteine 497-cysteine 508. A D/ECD-tripeptide motif is present at residues 368–370 (DCD). Positions 370, 371, and 385 each coordinate Ca(2+).

The protein belongs to the venom metalloproteinase (M12B) family. P-III subfamily. P-IIIa sub-subfamily. As to quaternary structure, monomer. It depends on Zn(2+) as a cofactor. As to expression, expressed by the venom gland.

Its subcellular location is the secreted. In terms of biological role, snake venom zinc metalloproteinase that catalyzes the conversion of prothrombin (F2) to alpha-thrombin through formation of a thrombin intermediate, thereby functioning as a procoagulant protein. The polypeptide is Zinc metalloproteinase-disintegrin-like EoMP06 (Echis ocellatus (Ocellated saw-scaled viper)).